A 131-amino-acid polypeptide reads, in one-letter code: Hydrogenase maturation factor HypA (131 aa).

His-2 contributes to the Ni(2+) binding site. Cys-74, Cys-77, Cys-91, and Cys-94 together coordinate Zn(2+).

The protein belongs to the HypA/HybF family.

Its function is as follows. Involved in the maturation of [NiFe] hydrogenases. Required for nickel insertion into the metal center of the hydrogenase. In Streptomyces avermitilis (strain ATCC 31267 / DSM 46492 / JCM 5070 / NBRC 14893 / NCIMB 12804 / NRRL 8165 / MA-4680), this protein is Hydrogenase maturation factor HypA.